The primary structure comprises 225 residues: Cytidylate kinase (225 aa).

An ATP-binding site is contributed by 10–18; that stretch reads GPASSGKST.

Belongs to the cytidylate kinase family. Type 1 subfamily.

The protein resides in the cytoplasm. The catalysed reaction is CMP + ATP = CDP + ADP. It catalyses the reaction dCMP + ATP = dCDP + ADP. In Streptococcus gordonii (strain Challis / ATCC 35105 / BCRC 15272 / CH1 / DL1 / V288), this protein is Cytidylate kinase.